A 129-amino-acid chain; its full sequence is M-zodatoxin-Lt8i (129 aa).

The signal sequence occupies residues 1–20; sequence MKYFVVALALVAAFACIAES. A propeptide spanning residues 21–60 is cleaved from the precursor; it reads KPAESEHELAEVEEENELADLEDAVWLEHLADLSDLEEAR.

This sequence belongs to the cationic peptide 06 (cytoinsectotoxin) family. Expressed by the venom gland.

The protein localises to the secreted. Its function is as follows. Insecticidal, cytolytic and antimicrobial peptide. Forms voltage-dependent, ion-permeable channels in membranes. At high concentration causes cell membrane lysis. This is M-zodatoxin-Lt8i (cit 1-6) from Lachesana tarabaevi (Spider).